A 1314-amino-acid chain; its full sequence is E3 ubiquitin-protein ligase RNF123 (1314 aa).

Residue alanine 2 is modified to N-acetylalanine. Positions 74–254 (VDSEDEESQG…VAFNFGSRPL (181 aa)) constitute a B30.2/SPRY domain. The tract at residues 460–481 (HRSSREGKDSAEDRAEAAEERP) is disordered. Residues 462–481 (SSREGKDSAEDRAEAAEERP) are compositionally biased toward basic and acidic residues. Serine 675 is subject to Phosphoserine. At arginine 683 the chain carries Asymmetric dimethylarginine. An interaction with NFKB1 region spans residues 968–974 (WILVRLW). Residues cysteine 1254, cysteine 1257, cysteine 1269, histidine 1271, cysteine 1274, cysteine 1277, cysteine 1288, and cysteine 1291 each coordinate Zn(2+). Residues 1254–1292 (CPICYAHPISAVFQPCGHKSCKACIDQHLMNNKDCFFCK) form an RING-type zinc finger.

As to quaternary structure, component of the KPC complex composed of RNF123/KPC1 and UBAC1/KPC2. Interacts with UBAC1 and CDKN1B via its N-terminal domain. Interacts with RIGI (via N-terminus) and IFIH1 (via N-terminus). In terms of processing, ubiquitinated, leading to its degradation. Deubiquitinated by USP19, thereby stimulating CDKN1B ubiquitin-dependent degradation.

Its subcellular location is the cytoplasm. It carries out the reaction S-ubiquitinyl-[E2 ubiquitin-conjugating enzyme]-L-cysteine + [acceptor protein]-L-lysine = [E2 ubiquitin-conjugating enzyme]-L-cysteine + N(6)-ubiquitinyl-[acceptor protein]-L-lysine.. It functions in the pathway protein modification; protein ubiquitination. Catalytic subunit of the KPC complex that acts as E3 ubiquitin-protein ligase. Promotes the ubiquitination and proteasome-mediated degradation of CDKN1B which is the cyclin-dependent kinase inhibitor at the G0-G1 transition of the cell cycle. Also acts as a key regulator of the NF-kappa-B signaling by promoting maturation of the NFKB1 component of NF-kappa-B. Acts by catalyzing ubiquitination of the NFKB1 p105 precursor, leading to limited proteasomal degradation of NFKB1 p105 and generation of the active NFKB1 p50 subunit. Functions also as an inhibitor of innate antiviral signaling mediated by RIGI and IFIH1 independently of its E3 ligase activity. Interacts with the N-terminal CARD domains of RIGI and IFIH1 and competes with the downstream adapter MAVS. The protein is E3 ubiquitin-protein ligase RNF123 of Oryctolagus cuniculus (Rabbit).